The chain runs to 104 residues: Circadian clock oscillator protein KaiB (104 aa).

This sequence belongs to the KaiB family. The KaiABC complex composition changes during the circadian cycle to control KaiC phosphorylation. Complexes KaiC(6), KaiA(2-4):KaiC(6), KaiB(6):KaiC(6) and KaiC(6):KaiB(6):KaiA(12) are among the most important forms, many form cooperatively. Undergoes a major conformational rearrangment; in the free state forms homotetramers as a dimer of dimers. When bound to the CI domain of KaiC switches to a monomeric thioredoxin-fold (KaiB(fs)). KaiB(fs) binds CikA, leading it to dephosphorylate phospho-RpaA.

Its function is as follows. Key component of the KaiABC oscillator complex, which constitutes the main circadian regulator in cyanobacteria. Complex composition changes during the circadian cycle to control KaiC phosphorylation. KaiA stimulates KaiC autophosphorylation, while KaiB sequesters KaiA, leading to KaiC autodephosphorylation. Phospho-Ser-431 KaiC accumulation triggers binding of KaiB to form the KaiB(6):KaiC(6) complex, leading to changes in output regulators CikA and SasA. KaiB switches to a thioredoxin-like fold (KaiB(fs)) when bound to KaiC. KaiB(6):KaiC(6) formation exposes a site for KaiA binding that sequesters KaiA from KaiC, making the KaiC(6):KaiB(6):KaiA(12) complex that results in KaiC autodephosphorylation. In terms of biological role, a metamorphic protein which reversibly switches between an inactive tetrameric fold and a rare, thioredoxin-like monomeric fold (KaiB(fs)). KaiB(fs) binds phospho-KaiC, KaiA and CikA. KaiA and CikA compete for binding to KaiB(fs), and KaiB(fs) and SasA compete for binding to KaiC, thus the clock oscillator and output signal pathway are tightly coupled. This is Circadian clock oscillator protein KaiB from Acaryochloris marina (strain MBIC 11017).